A 281-amino-acid chain; its full sequence is UPF0294 protein VC_2238 (281 aa).

The protein belongs to the UPF0294 family.

The protein localises to the cytoplasm. In Vibrio cholerae serotype O1 (strain ATCC 39315 / El Tor Inaba N16961), this protein is UPF0294 protein VC_2238.